The sequence spans 541 residues: Phosphoenolpyruvate carboxykinase (ATP) (541 aa).

Substrate is bound by residues Arg-67, Tyr-207, and Lys-213. ATP-binding positions include Lys-213, His-232, and 248 to 256 (GLSGTGKTT). Residues Lys-213 and His-232 each contribute to the Mn(2+) site. Mn(2+) is bound at residue Asp-269. ATP is bound by residues Glu-297, Arg-333, 449–450 (RI), and Thr-455. Residue Arg-333 coordinates substrate.

The protein belongs to the phosphoenolpyruvate carboxykinase (ATP) family. In terms of assembly, monomer. The cofactor is Mn(2+).

The protein resides in the cytoplasm. It catalyses the reaction oxaloacetate + ATP = phosphoenolpyruvate + ADP + CO2. It functions in the pathway carbohydrate biosynthesis; gluconeogenesis. In terms of biological role, involved in the gluconeogenesis. Catalyzes the conversion of oxaloacetate (OAA) to phosphoenolpyruvate (PEP) through direct phosphoryl transfer between the nucleoside triphosphate and OAA. In Vibrio atlanticus (strain LGP32) (Vibrio splendidus (strain Mel32)), this protein is Phosphoenolpyruvate carboxykinase (ATP).